The sequence spans 445 residues: Scarecrow-like protein 18 (445 aa).

Residues 1–21 (MLTSFKSSSSSSEDATATTTE) show a composition bias toward low complexity. The tract at residues 1-26 (MLTSFKSSSSSSEDATATTTENPPPL) is disordered. The 414-residue stretch at 32–445 (SAATSASHHL…RPLFSVSSWK (414 aa)) folds into the GRAS domain. The tract at residues 39-127 (HHLRRLLFTA…STVFTSSVCK (89 aa)) is leucine repeat I (LRI). The VHIID stretch occupies residues 146-217 (YLWLNQLTPF…SPPPSLRITG (72 aa)). The short motif at 179-183 (LHILD) is the VHIID element. The tract at residues 227 to 259 (RTGDRLTRFADSLGLQFQFHTLVIVEEDLAGLL) is leucine repeat II (LRII). A PFYRE region spans residues 275 to 366 (IAVNCVHFLH…QRWFGKEILD (92 aa)). Residues 369 to 445 (AAEETERKQR…RPLFSVSSWK (77 aa)) are SAW.

Belongs to the GRAS family. In terms of tissue distribution, expressed in roots and flowers.

It is found in the nucleus. Its function is as follows. Probable transcription factor required for axillary (lateral) shoot meristem formation during vegetative development. Seems to act upstream of REVOLUTA. In Arabidopsis thaliana (Mouse-ear cress), this protein is Scarecrow-like protein 18 (SCL18).